An 88-amino-acid chain; its full sequence is Small ribosomal subunit protein bS20 (88 aa).

The disordered stretch occupies residues 1-25 (MANSAQARKRVRQNNTRRQHAASQR). Residues 7 to 20 (ARKRVRQNNTRRQH) are compositionally biased toward basic residues.

Belongs to the bacterial ribosomal protein bS20 family.

Functionally, binds directly to 16S ribosomal RNA. The polypeptide is Small ribosomal subunit protein bS20 (Psychrobacter sp. (strain PRwf-1)).